A 219-amino-acid chain; its full sequence is Ribose-5-phosphate isomerase A (219 aa).

Substrate contacts are provided by residues 28 to 31 (TGST), 81 to 84 (DGAD), and 94 to 97 (KGGG). Glu-103 serves as the catalytic Proton acceptor. Lys-121 provides a ligand contact to substrate.

Belongs to the ribose 5-phosphate isomerase family. In terms of assembly, homodimer.

The catalysed reaction is aldehydo-D-ribose 5-phosphate = D-ribulose 5-phosphate. Its pathway is carbohydrate degradation; pentose phosphate pathway; D-ribose 5-phosphate from D-ribulose 5-phosphate (non-oxidative stage): step 1/1. Functionally, catalyzes the reversible conversion of ribose-5-phosphate to ribulose 5-phosphate. This Photobacterium profundum (strain SS9) protein is Ribose-5-phosphate isomerase A.